We begin with the raw amino-acid sequence, 121 residues long: Large ribosomal subunit protein uL14 (121 aa).

The protein belongs to the universal ribosomal protein uL14 family. Part of the 50S ribosomal subunit. Forms a cluster with proteins L3 and L19. In the 70S ribosome, L14 and L19 interact and together make contacts with the 16S rRNA in bridges B5 and B8.

Binds to 23S rRNA. Forms part of two intersubunit bridges in the 70S ribosome. The protein is Large ribosomal subunit protein uL14 of Legionella pneumophila (strain Paris).